A 217-amino-acid chain; its full sequence is Uracil-DNA glycosylase (217 aa).

Catalysis depends on Asp-62, which acts as the Proton acceptor.

The protein belongs to the uracil-DNA glycosylase (UDG) superfamily. UNG family.

The protein localises to the cytoplasm. It catalyses the reaction Hydrolyzes single-stranded DNA or mismatched double-stranded DNA and polynucleotides, releasing free uracil.. Excises uracil residues from the DNA which can arise as a result of misincorporation of dUMP residues by DNA polymerase or due to deamination of cytosine. This Streptococcus mutans serotype c (strain ATCC 700610 / UA159) protein is Uracil-DNA glycosylase.